The chain runs to 318 residues: Probable 3-hydroxyisobutyrate dehydrogenase-like 3, mitochondrial (318 aa).

Residues 35–64 (TRIGWIGIGIMGSAMVSHIIAAGYSVTVYA) and S129 each bind NAD(+). K203 is a catalytic residue. Residue K271 participates in NAD(+) binding.

This sequence belongs to the HIBADH-related family. 3-hydroxyisobutyrate dehydrogenase subfamily.

It is found in the mitochondrion. It carries out the reaction 3-hydroxy-2-methylpropanoate + NAD(+) = 2-methyl-3-oxopropanoate + NADH + H(+). Its pathway is amino-acid degradation; L-valine degradation. The polypeptide is Probable 3-hydroxyisobutyrate dehydrogenase-like 3, mitochondrial (Arabidopsis thaliana (Mouse-ear cress)).